A 521-amino-acid polypeptide reads, in one-letter code: Apolipoprotein N-acyltransferase (521 aa).

5 consecutive transmembrane segments (helical) span residues 24-44 (IKETGYSILGFVAYVPLFIAL), 71-91 (WLGFFHAFGWITFIGVIIGYI), 128-148 (IGFLAYPWGLAAFTVNNFNNL), 151-171 (IADIFGVFFVSFAVYFLNSGI), and 182-202 (NLLNIAFPTLLITASFTYGMI). One can recognise a CN hydrolase domain in the interval 218–472 (LNIAAIQLNT…KGYLLSTVKL (255 aa)). Glu-263 serves as the catalytic Proton acceptor. The active site involves Lys-331. Cys-383 serves as the catalytic Nucleophile.

Belongs to the CN hydrolase family. Apolipoprotein N-acyltransferase subfamily.

It localises to the cell inner membrane. The catalysed reaction is N-terminal S-1,2-diacyl-sn-glyceryl-L-cysteinyl-[lipoprotein] + a glycerophospholipid = N-acyl-S-1,2-diacyl-sn-glyceryl-L-cysteinyl-[lipoprotein] + a 2-acyl-sn-glycero-3-phospholipid + H(+). It functions in the pathway protein modification; lipoprotein biosynthesis (N-acyl transfer). Catalyzes the phospholipid dependent N-acylation of the N-terminal cysteine of apolipoprotein, the last step in lipoprotein maturation. This is Apolipoprotein N-acyltransferase from Borreliella burgdorferi (strain ATCC 35210 / DSM 4680 / CIP 102532 / B31) (Borrelia burgdorferi).